The primary structure comprises 456 residues: MTSDHRDALFSLELESPDPDEGGVADGGESDTDEDLRDNDDVVMPGTNEAEAEDDDPEEEDLNSPSTSSLPMVSTISATAVVSGTPTATSSTGAVTVALPAGSAVPVSVIPVDSDPKWHRMTEIVHQRPPIDDSRRLFQRLWTDEDEIELLRGFLDYMTMHRGSSSHPPDTAPFYEQIKSKLQLDFNKNQLVEKLRRLKKKYRNVMSKISSGKEVFFKSPHDQSTFEISRKIWNQTGKIIGFEDNNVMDFEETNNHHNTTNGNYSTFNSPSSNPTLELDSENGIEKKLTMSSSSVSRKRSRSRIGKIEEDNKPVITPSDGPIASNVNLNEAAAVGIGGNLGGLIEETVKNCVSPVIKEMMNGTTSMMMAAMGGGFPGLGGGGGGGGGHGFGSLSPMFTRPFNFGFGVEGGGNKAVADERWRKQQILELEVYSRRLELVQEQIRTTLNELKTMPSGI.

The segment at M1–P71 is disordered. Acidic residues-rich tracts occupy residues E15–D38 and A50–L62. S16 carries the phosphoserine modification.

It belongs to the GeBP family.

The polypeptide is Probable transcription factor At3g04930 (Arabidopsis thaliana (Mouse-ear cress)).